The following is a 332-amino-acid chain: L-lactate dehydrogenase A chain (332 aa).

NAD(+) is bound by residues 29-57 (GAVG…VEDK) and R99. Residues R106, N138, and R169 each contribute to the substrate site. N138 is a binding site for NAD(+). Residue H193 is the Proton acceptor of the active site. A substrate-binding site is contributed by T248.

The protein belongs to the LDH/MDH superfamily. LDH family. As to quaternary structure, homotetramer.

It localises to the cytoplasm. It catalyses the reaction (S)-lactate + NAD(+) = pyruvate + NADH + H(+). It functions in the pathway fermentation; pyruvate fermentation to lactate; (S)-lactate from pyruvate: step 1/1. Functionally, interconverts simultaneously and stereospecifically pyruvate and lactate with concomitant interconversion of NADH and NAD(+). The protein is L-lactate dehydrogenase A chain (LDHA) of Gallus gallus (Chicken).